We begin with the raw amino-acid sequence, 89 residues long: Small ribosomal subunit protein uS19 (89 aa).

The protein belongs to the universal ribosomal protein uS19 family.

In terms of biological role, protein S19 forms a complex with S13 that binds strongly to the 16S ribosomal RNA. This chain is Small ribosomal subunit protein uS19, found in Xanthomonas campestris pv. campestris (strain 8004).